Consider the following 322-residue polypeptide: Sulfate adenylyltransferase subunit 2 (322 aa).

The protein belongs to the PAPS reductase family. CysD subfamily. As to quaternary structure, heterodimer composed of CysD, the smaller subunit, and CysN.

The catalysed reaction is sulfate + ATP + H(+) = adenosine 5'-phosphosulfate + diphosphate. The protein operates within sulfur metabolism; hydrogen sulfide biosynthesis; sulfite from sulfate: step 1/3. In terms of biological role, with CysN forms the ATP sulfurylase (ATPS) that catalyzes the adenylation of sulfate producing adenosine 5'-phosphosulfate (APS) and diphosphate, the first enzymatic step in sulfur assimilation pathway. APS synthesis involves the formation of a high-energy phosphoric-sulfuric acid anhydride bond driven by GTP hydrolysis by CysN coupled to ATP hydrolysis by CysD. This Bradyrhizobium sp. (strain BTAi1 / ATCC BAA-1182) protein is Sulfate adenylyltransferase subunit 2.